The sequence spans 158 residues: Antitoxin TacA (158 aa).

Belongs to the TacA antitoxin family. As to quaternary structure, forms a complex with cognate toxin TacT.

Antitoxin component of a type II toxin-antitoxin (TA) system. Counteracts the toxic effect of cognate toxin TacT. Its function is as follows. TacA-TacT both represses and derepresses expression of its own operon. The protein is Antitoxin TacA of Mycobacterium tuberculosis (strain ATCC 25618 / H37Rv).